The sequence spans 316 residues: MSDISKASLPKAIFLMGPTASGKTALAIELRKILPVELISVDSALIYKGMDIGTAKPNVEELLAAPHRLLDIRDPSQAYSAADFRRDALAEMADITAAGRIPLLVGGTMLYFKALLEGLSPLPSADPEVRARIEQQAAEQGWESLHRQLQEVDPVAAARIHPNDPQRLSRALEVFFISGKTLTELTQTSGDALPYQVHQFAIAPASRELLHQRIEQRFHQMLASGFEAEVRALFARGDLHTDLPSIRCVGYRQMWSYLEGEISYDEMVYRGVCATRQLAKRQITWLRGWEGVHWLDSEKPEQARDEVLQVVGAIAG.

17–24 is a binding site for ATP; the sequence is GPTASGKT. 19 to 24 serves as a coordination point for substrate; the sequence is TASGKT. Interaction with substrate tRNA stretches follow at residues 42 to 45, 166 to 170, 247 to 252, and 280 to 287; these read DSAL, QRLSR, RCVGYR, and KRQITWLR.

It belongs to the IPP transferase family. As to quaternary structure, monomer. Requires Mg(2+) as cofactor.

The enzyme catalyses adenosine(37) in tRNA + dimethylallyl diphosphate = N(6)-dimethylallyladenosine(37) in tRNA + diphosphate. Catalyzes the transfer of a dimethylallyl group onto the adenine at position 37 in tRNAs that read codons beginning with uridine, leading to the formation of N6-(dimethylallyl)adenosine (i(6)A). This chain is tRNA dimethylallyltransferase, found in Escherichia coli O127:H6 (strain E2348/69 / EPEC).